Consider the following 107-residue polypeptide: U1-lycotoxin-Ls1n (107 aa).

The first 20 residues, 1 to 20 (MMKVLVVVALLVTLISYSSS), serve as a signal peptide directing secretion. A propeptide spanning residues 21-41 (EGIDDLEADELLSLMANEQTR) is cleaved from the precursor. 4 cysteine pairs are disulfide-bonded: Cys-44-Cys-59, Cys-51-Cys-68, Cys-58-Cys-86, and Cys-70-Cys-84.

It belongs to the neurotoxin 19 (CSTX) family. 04 (U1-Lctx) subfamily. Expressed by the venom gland.

It localises to the secreted. The sequence is that of U1-lycotoxin-Ls1n from Lycosa singoriensis (Wolf spider).